A 64-amino-acid polypeptide reads, in one-letter code: Large ribosomal subunit protein bL28 (64 aa).

This sequence belongs to the bacterial ribosomal protein bL28 family.

This is Large ribosomal subunit protein bL28 (rpmB) from Mycobacterium leprae (strain TN).